A 673-amino-acid chain; its full sequence is UvrABC system protein B (673 aa).

The region spanning 26 to 183 (EGLEDGLAHQ…RRLAELQYTR (158 aa)) is the Helicase ATP-binding domain. ATP is bound at residue 39-46 (GVTGSGKT). The Beta-hairpin motif lies at 92-115 (YYDYYQPEAYVPSSDTFIEKDASV). One can recognise a Helicase C-terminal domain in the interval 431–597 (QVDDLLSEIR…GLNKKVVDIL (167 aa)). The 36-residue stretch at 633 to 668 (QQKIHELEGQMMQHAQNLEFEEAAQIRDQLHQLREL) folds into the UVR domain.

The protein belongs to the UvrB family. In terms of assembly, forms a heterotetramer with UvrA during the search for lesions. Interacts with UvrC in an incision complex.

It localises to the cytoplasm. The UvrABC repair system catalyzes the recognition and processing of DNA lesions. A damage recognition complex composed of 2 UvrA and 2 UvrB subunits scans DNA for abnormalities. Upon binding of the UvrA(2)B(2) complex to a putative damaged site, the DNA wraps around one UvrB monomer. DNA wrap is dependent on ATP binding by UvrB and probably causes local melting of the DNA helix, facilitating insertion of UvrB beta-hairpin between the DNA strands. Then UvrB probes one DNA strand for the presence of a lesion. If a lesion is found the UvrA subunits dissociate and the UvrB-DNA preincision complex is formed. This complex is subsequently bound by UvrC and the second UvrB is released. If no lesion is found, the DNA wraps around the other UvrB subunit that will check the other stand for damage. This chain is UvrABC system protein B, found in Salmonella heidelberg (strain SL476).